The sequence spans 167 residues: Sperm acrosome membrane-associated protein 3 (167 aa).

Topologically, residues 1 to 63 are cytoplasmic; that stretch reads MVSALREAPL…EARSRALRRR (63 aa). Residues 64 to 84 form a helical; Signal-anchor for type II membrane protein membrane-spanning segment; it reads WCPAGIILLALISLLSCLLPA. Over 85-167 the chain is Extracellular; it reads SEAKVYGRCE…VPNVCQMYCS (83 aa). Positions 88-167 constitute a C-type lysozyme domain; that stretch reads KVYGRCELAR…VPNVCQMYCS (80 aa). C151 and C166 are oxidised to a cystine.

Belongs to the glycosyl hydrolase 22 family. In terms of assembly, interacts with ASTL. The processed form derives from the membrane form by proteolytic processing.

The protein resides in the cytoplasmic vesicle. It is found in the secretory vesicle. It localises to the acrosome membrane. Its function is as follows. Sperm surface membrane protein that may be involved in sperm-egg plasma membrane adhesion and fusion during fertilization. It could be a potential receptor for the egg oligosaccharide residue N-acetylglucosamine, which is present in the extracellular matrix over the egg plasma membrane. The processed form has no detectable bacteriolytic activity in vitro. In Pongo pygmaeus (Bornean orangutan), this protein is Sperm acrosome membrane-associated protein 3 (SPACA3).